The primary structure comprises 471 residues: Cysteine--tRNA ligase (471 aa).

Cysteine 29 contributes to the Zn(2+) binding site. The 'HIGH' region signature appears at 31-41 (PTVYNYIHIGN). Zn(2+)-binding residues include cysteine 209, histidine 234, and glutamate 238. The 'KMSKS' region signature appears at 266 to 270 (KMSKS). Lysine 269 is a binding site for ATP.

It belongs to the class-I aminoacyl-tRNA synthetase family. In terms of assembly, monomer. The cofactor is Zn(2+).

The protein localises to the cytoplasm. It carries out the reaction tRNA(Cys) + L-cysteine + ATP = L-cysteinyl-tRNA(Cys) + AMP + diphosphate. The chain is Cysteine--tRNA ligase from Listeria monocytogenes serovar 1/2a (strain ATCC BAA-679 / EGD-e).